A 263-amino-acid polypeptide reads, in one-letter code: Putative S-adenosyl-L-methionine-dependent methyltransferase Mkms_0098 (263 aa).

S-adenosyl-L-methionine-binding positions include aspartate 121 and 150 to 151 (ES).

The protein belongs to the UPF0677 family.

Its function is as follows. Exhibits S-adenosyl-L-methionine-dependent methyltransferase activity. This Mycobacterium sp. (strain KMS) protein is Putative S-adenosyl-L-methionine-dependent methyltransferase Mkms_0098.